A 122-amino-acid polypeptide reads, in one-letter code: UPF0102 protein DIP1513 (122 aa).

The protein belongs to the UPF0102 family.

The chain is UPF0102 protein DIP1513 from Corynebacterium diphtheriae (strain ATCC 700971 / NCTC 13129 / Biotype gravis).